Consider the following 184-residue polypeptide: SsrA-binding protein (184 aa).

Over residues 1–11 the composition is skewed to polar residues; it reads MAAKKSTPTDS. Residues 1–31 form a disordered region; sequence MAAKKSTPTDSGKSKGKKNKAQKGAGQKGAG.

The protein belongs to the SmpB family.

Its subcellular location is the cytoplasm. In terms of biological role, required for rescue of stalled ribosomes mediated by trans-translation. Binds to transfer-messenger RNA (tmRNA), required for stable association of tmRNA with ribosomes. tmRNA and SmpB together mimic tRNA shape, replacing the anticodon stem-loop with SmpB. tmRNA is encoded by the ssrA gene; the 2 termini fold to resemble tRNA(Ala) and it encodes a 'tag peptide', a short internal open reading frame. During trans-translation Ala-aminoacylated tmRNA acts like a tRNA, entering the A-site of stalled ribosomes, displacing the stalled mRNA. The ribosome then switches to translate the ORF on the tmRNA; the nascent peptide is terminated with the 'tag peptide' encoded by the tmRNA and targeted for degradation. The ribosome is freed to recommence translation, which seems to be the essential function of trans-translation. The chain is SsrA-binding protein from Corynebacterium jeikeium (strain K411).